The chain runs to 161 residues: Pleiotrophin-A (161 aa).

A signal peptide spans 1–23 (MRHQHGLFMLALLAFLFVITVLG). 5 disulfide bridges follow: C41/C70, C49/C79, C56/C83, C93/C125, and C103/C135. 2 chondroitin sulfate binding regions span residues 86 to 93 (KKQFGAEC) and 117 to 125 (KRALHNAEC). Residues 136–161 (GKVTKPKLQESKKKKKEGKNKEKLLD) are disordered. The chondroitin sulfate A binding stretch occupies residues 141–161 (PKLQESKKKKKEGKNKEKLLD).

It belongs to the pleiotrophin family. Expressed in high levels in brain and eye. Lower levels in bone. In the tailbud embryo stage, it is expressed exclusively in the central nervous system, especially in the hind region of the brain.

It is found in the secreted. In terms of biological role, secreted growth factor that mediates its signal through cell-surface proteoglycan and non-proteoglycan receptors. Binds cell-surface proteoglycan receptor via their chondroitin sulfate (CS) groups. Thereby regulates many processes like cell proliferation, cell survival, cell growth, cell differentiation and cell migration. Has antibacterial activity against both Gram-positive and Gram-negative bacteria. This Xenopus laevis (African clawed frog) protein is Pleiotrophin-A (ptn-a).